A 973-amino-acid chain; its full sequence is GATOR2 complex protein WDR59 (973 aa).

WD repeat units lie at residues 57–98 (QSKW…GEVC), 103–143 (GHTR…KPTV), 146–185 (SAVA…TAVE), 189–229 (AHLS…KYLN), 232–276 (PCQV…TPVH), and 280–324 (GHDD…QRLC). Positions 346–365 (DKALQPQDSEPQHSSGHGDE) are disordered. A compositionally biased stretch (polar residues) spans 351–360 (PQDSEPQHSS). The RWD domain occupies 393–494 (QEFSLINVQI…RQLVSWLESV (102 aa)). The C4-type zinc-finger motif lies at 900–920 (YCSHCRSEARGTQCAICKGFT). Positions 901, 904, 913, 916, 926, 937, 942, 945, 948, 959, 963, 965, and 967 each coordinate Zn(2+). An RING-type; atypical zinc finger spans residues 921–970 (FQCAICHVAVRGSSNFCLTCGHGGHTSHMMEWFRTQEVCPTGCGCHCLLE).

This sequence belongs to the WD repeat WDR59 family. In terms of assembly, component of the GATOR2 subcomplex, composed of MIOS, SEC13, SEH1L, WDR24 and WDR59. The GATOR2 complex interacts with CASTOR1 and CASTOR2; the interaction is negatively regulated by arginine. The GATOR2 complex interacts with SESN1, SESN2 and SESN3; the interaction is negatively regulated by amino acids. Interacts with DDB1-CUL4A/B E3 ligase complexes.

It is found in the lysosome membrane. The GATOR2 complex is negatively regulated by the upstream amino acid sensors CASTOR1 and SESN2, which sequester the GATOR2 complex in absence of amino acids. In the presence of abundant amino acids, GATOR2 is released from CASTOR1 and SESN2 and activated. As a component of the GATOR2 complex, functions as an activator of the amino acid-sensing branch of the mTORC1 signaling pathway. The GATOR2 complex indirectly activates mTORC1 through the inhibition of the GATOR1 subcomplex. GATOR2 probably acts as an E3 ubiquitin-protein ligase toward GATOR1. In the presence of abundant amino acids, the GATOR2 complex mediates ubiquitination of the NPRL2 core component of the GATOR1 complex, leading to GATOR1 inactivation. In the absence of amino acids, GATOR2 is inhibited, activating the GATOR1 complex. In Gallus gallus (Chicken), this protein is GATOR2 complex protein WDR59.